The sequence spans 150 residues: Large ribosomal subunit protein bL9 (150 aa).

This sequence belongs to the bacterial ribosomal protein bL9 family.

Binds to the 23S rRNA. This is Large ribosomal subunit protein bL9 from Corynebacterium efficiens (strain DSM 44549 / YS-314 / AJ 12310 / JCM 11189 / NBRC 100395).